The sequence spans 130 residues: Histone H2A type 2 (130 aa).

The disordered stretch occupies residues 1-22 (MSGRGKQGGKTRAKSKTRSSRA). The residue at position 2 (S2) is an N-acetylserine. The residue at position 2 (S2) is a Phosphoserine. Residue K6 is modified to N6-(2-hydroxyisobutyryl)lysine. K6 bears the N6-acetyllysine mark. Residues 7-19 (QGGKTRAKSKTRS) are compositionally biased toward basic residues. K10 carries the N6-(2-hydroxyisobutyryl)lysine; alternate modification. An N6-lactoyllysine; alternate modification is found at K10. Residue K10 is modified to N6-succinyllysine. Residues K14 and K16 each participate in a glycyl lysine isopeptide (Lys-Gly) (interchain with G-Cter in ubiquitin) cross-link. K37 is subject to N6-(2-hydroxyisobutyryl)lysine; alternate. K76 carries the N6-(2-hydroxyisobutyryl)lysine modification. K96 is modified (N6-(2-hydroxyisobutyryl)lysine; alternate). At K96 the chain carries N6-succinyllysine. An N6-glutaryllysine; alternate modification is found at K96. Position 105 is an N5-methylglutamine (Q105). An N6-(2-hydroxyisobutyryl)lysine; alternate modification is found at K119. An N6-glutaryllysine; alternate modification is found at K119. A Glycyl lysine isopeptide (Lys-Gly) (interchain with G-Cter in ubiquitin) cross-link involves residue K120.

The protein belongs to the histone H2A family. The nucleosome is a histone octamer containing two molecules each of H2A, H2B, H3 and H4 assembled in one H3-H4 heterotetramer and two H2A-H2B heterodimers. The octamer wraps approximately 147 bp of DNA. Post-translationally, monoubiquitination of Lys-120 (H2AK119Ub) gives a specific tag for epigenetic transcriptional repression. Following DNA double-strand breaks (DSBs), it is ubiquitinated through 'Lys-63' linkage of ubiquitin moieties, leading to the recruitment of repair proteins to sites of DNA damage. H2AK119Ub and ionizing radiation-induced 'Lys-63'-linked ubiquitination are distinct events. In terms of processing, phosphorylation on Ser-2 is enhanced during mitosis. Phosphorylation on Ser-2 directly represses transcription. Glutamine methylation at Gln-105 (H2AQ104me) by FBL is specifically dedicated to polymerase I. It is present at 35S ribosomal DNA locus and impairs binding of the FACT complex.

The protein resides in the nucleus. It is found in the chromosome. Functionally, core component of nucleosome. Nucleosomes wrap and compact DNA into chromatin, limiting DNA accessibility to the cellular machineries which require DNA as a template. Histones thereby play a central role in transcription regulation, DNA repair, DNA replication and chromosomal stability. DNA accessibility is regulated via a complex set of post-translational modifications of histones, also called histone code, and nucleosome remodeling. This is Histone H2A type 2 from Xenopus laevis (African clawed frog).